Here is a 283-residue protein sequence, read N- to C-terminus: Acetylglutamate kinase (283 aa).

Substrate contacts are provided by residues 64 to 65 (GG), Arg86, and Asn178.

Belongs to the acetylglutamate kinase family. ArgB subfamily.

It localises to the cytoplasm. The enzyme catalyses N-acetyl-L-glutamate + ATP = N-acetyl-L-glutamyl 5-phosphate + ADP. It participates in amino-acid biosynthesis; L-arginine biosynthesis; N(2)-acetyl-L-ornithine from L-glutamate: step 2/4. Functionally, catalyzes the ATP-dependent phosphorylation of N-acetyl-L-glutamate. This is Acetylglutamate kinase from Lactococcus lactis subsp. cremoris (strain SK11).